The following is a 265-amino-acid chain: Palmitoyltransferase ZDHHC21 (265 aa).

Residues 1–16 (MGLRIHFVVDPHGWCC) lie on the Cytoplasmic side of the membrane. Residues 17–37 (MGLIVFVWLYNIVIIPKIVLF) traverse the membrane as a helical segment. The Extracellular segment spans residues 38 to 44 (PHYEEGH). Residues 45–65 (IPGILIIIFYGISIFCLVALV) form a helical membrane-spanning segment. At 66-133 (RASLTDPGRL…NNCVGEDNHW (68 aa)) the chain is on the cytoplasmic side. A DHHC domain is found at 90 to 140 (ELCNKCNLMRPKRSHHCSRCGHCVRRMDHHCPWINNCVGEDNHWLFLQLCF). C120 functions as the S-palmitoyl cysteine intermediate in the catalytic mechanism. The helical transmembrane segment at 134–154 (LFLQLCFYTELLTCYALMFSF) threads the bilayer. Residues 155-185 (CHYYYFLPLKKRNLDLFVVRHELAIMRLAAF) are Extracellular-facing. A helical membrane pass occupies residues 186-206 (MGITMLVGITGLFYTQLIGII). Residues 207-265 (TDTTSIEKMSNCCEEISRPRKPWQQTFSEVFGTRWKILWFIPFRQRQPLRVPYHFANHV) are Cytoplasmic-facing.

Belongs to the DHHC palmitoyltransferase family. In terms of tissue distribution, widely expressed. Expressed in Henle's layer within the hair bulb and the hair shaft cuticle (at protein level). Expression is limited to the post-mitotic lineages of inner root sheath (IRS) and cuticle.

Its subcellular location is the golgi apparatus membrane. It is found in the golgi apparatus. The protein localises to the cis-Golgi network membrane. It localises to the cell membrane. It catalyses the reaction L-cysteinyl-[protein] + hexadecanoyl-CoA = S-hexadecanoyl-L-cysteinyl-[protein] + CoA. Functionally, palmitoyltransferase that catalyzes the addition of palmitate onto various protein substrates. Palmitoylates sex steroid hormone receptors, including ESR1, PGR and AR, thereby regulating their targeting to the plasma membrane. This affects rapid intracellular signaling by sex hormones via ERK and AKT kinases and the generation of cAMP, but does not affect that mediated by their nuclear receptor. Palmitoylates FYN, regulates its localization in hair follicles and plays a key role in epidermal homeostasis and hair follicle differentiation. Through the palmitoylation of PLCB1 and the regulation of PLCB1 downstream signaling may indirectly regulate the function of the endothelial barrier and the adhesion of leukocytes to the endothelium. Also has a palmitoyltransferase activity toward ADRA1D, positively regulating its activity and expression and may thereby play a role in vascular contraction. May also palmitoylate eNOS and LCK. In Mus musculus (Mouse), this protein is Palmitoyltransferase ZDHHC21.